Here is a 404-residue protein sequence, read N- to C-terminus: Aspergillopepsin-1 (404 aa).

A signal peptide spans 1–20 (MVILSKVAAVAVGLSTVASA). The propeptide at 21–77 (LPTGPSHSPHARRGFTINQITRQTARVGPKTASFPAIYSRALAKYGGTVPAHLKSAV) is activation peptide. The 307-residue stretch at 95–401 (YLTPVNIGGT…DSQGPRLGFA (307 aa)) folds into the Peptidase A1 domain. Asp111 is an active-site residue. The N-linked (GlcNAc...) asparagine glycan is linked to Asn140. Asp293 is a catalytic residue. Cys329 and Cys364 are joined by a disulfide.

Belongs to the peptidase A1 family. As to quaternary structure, monomer.

It localises to the secreted. It carries out the reaction Hydrolysis of proteins with broad specificity. Generally favors hydrophobic residues in P1 and P1', but also accepts Lys in P1, which leads to activation of trypsinogen. Does not clot milk.. Functionally, secreted aspartic endopeptidase that allows assimilation of proteinaceous substrates. The scissile peptide bond is attacked by a nucleophilic water molecule activated by two aspartic residues in the active site. Shows a broad primary substrate specificity. Favors hydrophobic residues at the P1 and P1' positions, but also accepts a lysine residue in the P1 position, leading to the activation of trypsinogen and chymotrypsinogen A. In Aspergillus flavus (strain ATCC 200026 / FGSC A1120 / IAM 13836 / NRRL 3357 / JCM 12722 / SRRC 167), this protein is Aspergillopepsin-1 (pepA).